We begin with the raw amino-acid sequence, 451 residues long: Chromosomal replication initiator protein DnaA (451 aa).

The segment at 1-82 (MENSLWKQCL…RLELQIGSSA (82 aa)) is domain I, interacts with DnaA modulators. Residues 82-114 (AVVAPPRRRQVSVTTPSPSAAADQTPATRSAAS) form a domain II region. The tract at residues 85–112 (APPRRRQVSVTTPSPSAAADQTPATRSA) is disordered. Positions 115-331 (NLNSNFTFDT…GALRRVVANA (217 aa)) are domain III, AAA+ region. Glycine 159, glycine 161, lysine 162, and threonine 163 together coordinate ATP. Positions 332 to 451 (QFTGQEITVE…YSNLLRTLST (120 aa)) are domain IV, binds dsDNA.

This sequence belongs to the DnaA family. In terms of assembly, oligomerizes as a right-handed, spiral filament on DNA at oriC.

The protein resides in the cytoplasm. Plays an essential role in the initiation and regulation of chromosomal replication. ATP-DnaA binds to the origin of replication (oriC) to initiate formation of the DNA replication initiation complex once per cell cycle. Binds the DnaA box (a 9 base pair repeat at the origin) and separates the double-stranded (ds)DNA. Forms a right-handed helical filament on oriC DNA; dsDNA binds to the exterior of the filament while single-stranded (ss)DNA is stabiized in the filament's interior. The ATP-DnaA-oriC complex binds and stabilizes one strand of the AT-rich DNA unwinding element (DUE), permitting loading of DNA polymerase. After initiation quickly degrades to an ADP-DnaA complex that is not apt for DNA replication. Binds acidic phospholipids. In Alkalilimnicola ehrlichii (strain ATCC BAA-1101 / DSM 17681 / MLHE-1), this protein is Chromosomal replication initiator protein DnaA.